Reading from the N-terminus, the 842-residue chain is MRQRDLKFTFVVGEGKLAFDVVEFELEEALCEPFRLNLKLASDKNAIDFRQVLDQPGTFTLWQDGRPARYVHGIVSHFTQGSSGFRRTRYELLLEPQLARLELCCNWRIFQEKSVPEILQALLKEHRVLDYEQRIYHEHLPREYCVQAGDSDHYLHDRLAFEEGLVYYFRFDEHRHTLVCSDRLYVQERIAGGPVLFSAQPEGDNPQPVLHSFRYSENVRTARQTQRDYSFKRPTYDQEHHLAGEALEHQGSSYERYDYPGRYKRSGAGRPFSESRLRGHRRDARVASVSGDDPRLIPGHAFALEGHPRADFNAWWRPVRVVHRGTQYAGQEEESADAPLGVSYDLRAELVPEDVEWRPAPLPRPRIDGPQIATVVGPAGEEIHCDEWGRVKVQFPWDREGRHDEFSTCWIRVAQNWAGADWGHMAIPRIGQEVIVDYLDGDCDQPIVTGRTYRATNRPPYALPDHKILSTIKSKEYKGSRANELRIDDTTAQISAALMSDHGASALHLGYLTHPRPEGGKPRGEGFELRTDEHGAVRAAKGLLLSTEEQLRAGAGHLDRGVVVQVLEAALKLARELGDYAGEHQGVGHDAAPQQTLQEAVRDLGHGANDESGKSNGGKPAIALSGPAGIAAATPASLTLAAGEHVDSVARQNQQVTAGQKVVINAGSDIGLFAQGGELRQITHQGPMLLQAQKNDIRLEAEQSVEVSASQQHVLVTAKEHITLMCGGAYLTLKGGNIELGMPGNFVVKAAKHSHVGPAHASTSFNAWDSTPFDDRYVLRDEATLEPLPNIAVEVIRGDGGVVKLMTDSQGRLPKQQHLAMDPVQIRILGKGSHNSDTESNT.

The disordered stretch occupies residues 265-291 (RSGAGRPFSESRLRGHRRDARVASVSG).

It belongs to the VgrG protein family.

Its function is as follows. Part of the H2 type VI secretion system (H2-T6SS) specialized secretion system, which delivers several virulence factors in both prokaryotic and eukaryotic cells during infection. May form the spike at the tip of the elongating tube formed by haemolysin co-regulated protein 2a/Hcp2a. In turn, may allow the delivery of the Tle4 antibacterial toxin to target cells where it exerts its toxicity. Also promotes the release of VgrG2b toxin to the host cell. This chain is Type VI secretion system spike protein VgrG2a, found in Pseudomonas aeruginosa (strain ATCC 15692 / DSM 22644 / CIP 104116 / JCM 14847 / LMG 12228 / 1C / PRS 101 / PAO1).